Reading from the N-terminus, the 373-residue chain is Alanine racemase (373 aa).

K40 serves as the catalytic Proton acceptor; specific for D-alanine. K40 is subject to N6-(pyridoxal phosphate)lysine. Substrate is bound at residue R140. Y268 acts as the Proton acceptor; specific for L-alanine in catalysis. Residue M315 coordinates substrate.

This sequence belongs to the alanine racemase family. Pyridoxal 5'-phosphate is required as a cofactor.

It catalyses the reaction L-alanine = D-alanine. It participates in amino-acid biosynthesis; D-alanine biosynthesis; D-alanine from L-alanine: step 1/1. Its function is as follows. Catalyzes the interconversion of L-alanine and D-alanine. May also act on other amino acids. This is Alanine racemase (alr) from Limosilactobacillus fermentum (strain NBRC 3956 / LMG 18251) (Lactobacillus fermentum).